The following is a 156-amino-acid chain: Small ribosomal subunit protein uS7 (156 aa).

The protein belongs to the universal ribosomal protein uS7 family. As to quaternary structure, part of the 30S ribosomal subunit. Contacts proteins S9 and S11.

Its function is as follows. One of the primary rRNA binding proteins, it binds directly to 16S rRNA where it nucleates assembly of the head domain of the 30S subunit. Is located at the subunit interface close to the decoding center, probably blocks exit of the E-site tRNA. In Bartonella quintana (strain Toulouse) (Rochalimaea quintana), this protein is Small ribosomal subunit protein uS7.